The chain runs to 460 residues: Probable serine/threonine-protein kinase kinase DDB_G0280557 (460 aa).

One can recognise a Protein kinase domain in the interval 102-416 (INLKSITDCG…IDQLLAHKYF (315 aa)). ATP is bound by residues Lys-131 and 154–162 (QRHFQQHPL). The active-site Proton acceptor is Asp-250.

This sequence belongs to the protein kinase superfamily. CMGC Ser/Thr protein kinase family. MAP kinase subfamily.

It carries out the reaction L-seryl-[protein] + ATP = O-phospho-L-seryl-[protein] + ADP + H(+). It catalyses the reaction L-threonyl-[protein] + ATP = O-phospho-L-threonyl-[protein] + ADP + H(+). In Dictyostelium discoideum (Social amoeba), this protein is Probable serine/threonine-protein kinase kinase DDB_G0280557.